The primary structure comprises 338 residues: Cytochrome f (338 aa).

A signal peptide spans 1 to 45 (MNFKVCSFPSRRQSIAAFVRVLMVILLTLGALVSSDVLLPQPAAA). 4 residues coordinate heme: tyrosine 46, cysteine 66, cysteine 69, and histidine 70. The chain crosses the membrane as a helical span at residues 300 to 316 (IAFLAAITLTQILLVLK).

It belongs to the cytochrome f family. In terms of assembly, the 4 large subunits of the cytochrome b6-f complex are cytochrome b6, subunit IV (17 kDa polypeptide, PetD), cytochrome f and the Rieske protein, while the 4 small subunits are PetG, PetL, PetM and PetN. The complex functions as a dimer. Heme is required as a cofactor.

The protein resides in the cellular thylakoid membrane. In terms of biological role, component of the cytochrome b6-f complex, which mediates electron transfer between photosystem II (PSII) and photosystem I (PSI), cyclic electron flow around PSI, and state transitions. This Leptolyngbya laminosa (Phormidium laminosum) protein is Cytochrome f (petA).